The sequence spans 286 residues: Shikimate dehydrogenase (NADP(+)) (286 aa).

Residues 20-22 (SLS) and Thr67 each bind shikimate. Lys71 acts as the Proton acceptor in catalysis. 2 residues coordinate shikimate: Asn92 and Asp107. Residues 132–136 (GAGGA) and Met228 contribute to the NADP(+) site. Tyr230 serves as a coordination point for shikimate. Gly251 is an NADP(+) binding site.

It belongs to the shikimate dehydrogenase family. Homodimer.

It carries out the reaction shikimate + NADP(+) = 3-dehydroshikimate + NADPH + H(+). Its pathway is metabolic intermediate biosynthesis; chorismate biosynthesis; chorismate from D-erythrose 4-phosphate and phosphoenolpyruvate: step 4/7. Involved in the biosynthesis of the chorismate, which leads to the biosynthesis of aromatic amino acids. Catalyzes the reversible NADPH linked reduction of 3-dehydroshikimate (DHSA) to yield shikimate (SA). The chain is Shikimate dehydrogenase (NADP(+)) from Geobacter sulfurreducens (strain ATCC 51573 / DSM 12127 / PCA).